Here is a 147-residue protein sequence, read N- to C-terminus: Lipoprotein YfjS (147 aa).

The first 20 residues, 1–20 (MKRKTLPLLALVATSLFLSA), serve as a signal peptide directing secretion. Cys21 carries N-palmitoyl cysteine lipidation. A lipid anchor (S-diacylglycerol cysteine) is attached at Cys21.

To E.coli YafY.

It localises to the cell inner membrane. Functionally, does not induce degP when overexpressed unless it is mutated to resemble YafY. This is Lipoprotein YfjS (yfjS) from Escherichia coli (strain K12).